A 126-amino-acid polypeptide reads, in one-letter code: uncharacterized protein (126 aa).

The disordered stretch occupies residues V83–H126. The segment covering H116–H126 has biased composition (basic and acidic residues).

This is an uncharacterized protein from Galliformes (FAdV-1).